Reading from the N-terminus, the 234-residue chain is Arsenate respiratory reductase iron-sulfur subunit ArrB (234 aa).

4Fe-4S ferredoxin-type domains lie at 3–32 (LGMV…NDGI), 48–79 (VKYT…KDKR), and 80–109 (GLTL…FNAA). [4Fe-4S] cluster contacts are provided by cysteine 12, cysteine 15, cysteine 18, cysteine 22, cysteine 57, cysteine 60, cysteine 65, cysteine 69, cysteine 89, cysteine 92, cysteine 95, cysteine 99, cysteine 164, cysteine 167, cysteine 179, and cysteine 183.

Heterodimer composed of one large subunit (ArrA) and one small subunit (ArrB). It depends on [4Fe-4S] cluster as a cofactor.

The protein localises to the periplasm. With respect to regulation, phosphate is a competitive inhibitor. Its function is as follows. Component of the arsenate respiratory reductase (Arr) complex, which catalyzes the reduction of arsenate (As(V)) to arsenite (As(III)). ArrB is probably the electron transfer subunit. The periplasmic localization of this complex may allow the cell to couple arsenate reduction to energy production before arsenate can be transported to the cell cytoplasm and enter the ars detoxification pathway, an energy-requiring process. The chain is Arsenate respiratory reductase iron-sulfur subunit ArrB from Shewanella sp. (strain ANA-3).